The chain runs to 393 residues: Stearoyl-[acyl-carrier-protein] 9-desaturase, chloroplastic (393 aa).

A chloroplast-targeting transit peptide spans 1 to 30 (MALNFNSPTFQSIKTTRRPCSPLRSPRVFM). Residues Glu-135, Glu-173, His-176, Glu-226, Glu-259, and His-262 each coordinate Fe cation.

This sequence belongs to the fatty acid desaturase type 2 family. In terms of assembly, homodimer. Fe(2+) serves as cofactor.

The protein resides in the plastid. The protein localises to the chloroplast. The catalysed reaction is octadecanoyl-[ACP] + 2 reduced [2Fe-2S]-[ferredoxin] + O2 + 2 H(+) = (9Z)-octadecenoyl-[ACP] + 2 oxidized [2Fe-2S]-[ferredoxin] + 2 H2O. Its pathway is lipid metabolism; fatty acid metabolism. In terms of biological role, converts stearoyl-ACP to oleoyl-ACP by introduction of a cis double bond between carbons 9 and 10 of the acyl chain. The chain is Stearoyl-[acyl-carrier-protein] 9-desaturase, chloroplastic from Solanum commersonii (Commerson's wild potato).